Reading from the N-terminus, the 490-residue chain is Sushi domain-containing protein 4 (490 aa).

The interval 1 to 21 (MYHGMNPSNGDGFLEQQQQQQ) is disordered. The signal sequence occupies residues 1–41 (MYHGMNPSNGDGFLEQQQQQQQPQSPQRLLAVILWFQLALC). Residues 42–319 (FGPAQLTGGF…PSTHETLLTT (278 aa)) are Extracellular-facing. 4 consecutive Sushi domains span residues 55-119 (QVCA…ICVQ), 120-179 (EDCR…ICQG), 178-239 (QGCL…RCLA), and 241-304 (EVCP…YCIK). 8 disulfide bridges follow: Cys57/Cys99, Cys85/Cys117, Cys122/Cys165, Cys147/Cys177, Cys180/Cys224, Cys210/Cys237, Cys243/Cys289, and Cys274/Cys302. Residues Asn104 and Asn134 are each glycosylated (N-linked (GlcNAc...) asparagine). N-linked (GlcNAc...) asparagine glycosylation is present at Asn192. A helical membrane pass occupies residues 320–340 (WKIVAFTATSVLLVLLLVILA). Over 341 to 490 (RMFQTKFKAH…DEIPLMEEDP (150 aa)) the chain is Cytoplasmic. Residues 401–490 (GCPLPVDDQS…DEIPLMEEDP (90 aa)) form a disordered region. Residues 430–456 (CDSVSGSSELLQSLYSPPRCQESTHPA) are compositionally biased toward polar residues. Residues 479–490 (IADEIPLMEEDP) are compositionally biased toward acidic residues.

Isoform 3 is the predominant isoform in all tissues except cortex, cerebellum, kidney, and breast. Isoform 1 is found primarily in the esophagus and the brain.

The protein resides in the membrane. It localises to the secreted. Functionally, acts as a complement inhibitor by disrupting the formation of the classical C3 convertase. Isoform 3 inhibits the classical complement pathway, while membrane-bound isoform 1 inhibits deposition of C3b via both the classical and alternative complement pathways. The protein is Sushi domain-containing protein 4 (SUSD4) of Homo sapiens (Human).